The primary structure comprises 112 residues: Nucleoid-associated protein CV_1611 (112 aa).

Belongs to the YbaB/EbfC family. In terms of assembly, homodimer.

The protein resides in the cytoplasm. It is found in the nucleoid. Its function is as follows. Binds to DNA and alters its conformation. May be involved in regulation of gene expression, nucleoid organization and DNA protection. The sequence is that of Nucleoid-associated protein CV_1611 from Chromobacterium violaceum (strain ATCC 12472 / DSM 30191 / JCM 1249 / CCUG 213 / NBRC 12614 / NCIMB 9131 / NCTC 9757 / MK).